Here is a 127-residue protein sequence, read N- to C-terminus: Major sperm protein 77/79 (127 aa).

An N-acetylalanine modification is found at Ala-2. One can recognise an MSP domain in the interval 9–126; that stretch reads DIQTQPGTKI…RRKNLPIEYN (118 aa).

Sperm.

It is found in the cell projection. It localises to the pseudopodium. The protein localises to the cytoplasm. The protein resides in the cytoskeleton. Functionally, central component in molecular interactions underlying sperm crawling. Forms an extensive filament system that extends from sperm villipoda, along the leading edge of the pseudopod. This chain is Major sperm protein 77/79 (msp-77), found in Caenorhabditis elegans.